The sequence spans 293 residues: ATP phosphoribosyltransferase (293 aa).

It belongs to the ATP phosphoribosyltransferase family. Long subfamily. Mg(2+) serves as cofactor.

It localises to the cytoplasm. The enzyme catalyses 1-(5-phospho-beta-D-ribosyl)-ATP + diphosphate = 5-phospho-alpha-D-ribose 1-diphosphate + ATP. The protein operates within amino-acid biosynthesis; L-histidine biosynthesis; L-histidine from 5-phospho-alpha-D-ribose 1-diphosphate: step 1/9. Its activity is regulated as follows. Feedback inhibited by histidine. Catalyzes the condensation of ATP and 5-phosphoribose 1-diphosphate to form N'-(5'-phosphoribosyl)-ATP (PR-ATP). Has a crucial role in the pathway because the rate of histidine biosynthesis seems to be controlled primarily by regulation of HisG enzymatic activity. This is ATP phosphoribosyltransferase from Nitratidesulfovibrio vulgaris (strain ATCC 29579 / DSM 644 / CCUG 34227 / NCIMB 8303 / VKM B-1760 / Hildenborough) (Desulfovibrio vulgaris).